A 549-amino-acid chain; its full sequence is Neurofilament light polypeptide (549 aa).

The residue at position 2 (Ser2) is an N-acetylserine. Residues 2 to 92 (SSFYSEPYYS…KSIRTQEKAQ (91 aa)) form a head region. Thr21 carries an O-linked (GlcNAc) threonine glycan. An Asymmetric dimethylarginine; alternate modification is found at Arg23. An Omega-N-methylarginine; alternate modification is found at Arg23. Ser27 carries O-linked (GlcNAc) serine glycosylation. The residue at position 30 (Arg30) is an Omega-N-methylarginine. Tyr43 carries the phosphotyrosine modification. Ser56, Ser66, and Ser102 each carry phosphoserine. Residues 89-400 (EKAQLQDLND…KLLEGEETRL (312 aa)) enclose the IF rod domain. Residues 93 to 124 (LQDLNDRFASFIERVHELEQQNKVLEAQLLVL) are coil 1A. Residues 125-137 (RQKHSEPSRFRAL) form a linker 1 region. Residues 138 to 233 (YEQEIRDLRL…KVHEEEIAEL (96 aa)) are coil 1B. The segment at 234-252 (QAQIQYAQISVEMDVSSKP) is linker 12. Residues 253-271 (DLSAALKDIRAQYEKLAAK) are coil 2A. Residues 272 to 280 (NMQNAEEWF) are linker 2. The segment at 281 to 396 (KSRFTVLTES…AAYRKLLEGE (116 aa)) is coil 2B. The tract at residues 381–391 (ALDIEIAAYRK) is epitope; recognized by IF-specific monoclonal antibody. The tail, subdomain A stretch occupies residues 397 to 443 (ETRLSFTSVGSLTTGYSQSSQVFGRSAYGGLQTSSYLMSTRSFPSYY). The interval 397 to 549 (ETRLSFTSVG…GEEQATKKKD (153 aa)) is tail. Residues 444–549 (TSHVQEEQIE…GEEQATKKKD (106 aa)) are tail, subdomain B (acidic). The segment at 462–549 (KAEEAKDEPP…GEEQATKKKD (88 aa)) is disordered. Residues 471 to 534 (PSEGEAEEEG…ETKEAEEEEK (64 aa)) are compositionally biased toward acidic residues. The residue at position 472 (Ser472) is a Phosphoserine. Thr526 is subject to Phosphothreonine. Over residues 535–549 (KDEGAGEEQATKKKD) the composition is skewed to basic and acidic residues.

It belongs to the intermediate filament family. Forms homodimers (in vitro). Forms heterodimers with NEFH or NEFM; which can further hetero-oligomerize (in vitro). Forms heterodimers with INA (in vitro). Interacts with ARHGEF28. Interacts with TRIM2. O-glycosylated. Post-translationally, phosphorylated in the head and rod regions by the PKC kinase PKN1, leading to the inhibition of polymerization. In terms of processing, ubiquitinated in the presence of TRIM2 and UBE2D1.

The protein localises to the cell projection. It localises to the axon. The protein resides in the cytoplasm. Its subcellular location is the cytoskeleton. In terms of biological role, neurofilaments usually contain three intermediate filament proteins: NEFL, NEFM, and NEFH which are involved in the maintenance of neuronal caliber. May additionally cooperate with the neuronal intermediate filament proteins PRPH and INA to form neuronal filamentous networks. This is Neurofilament light polypeptide (NEFL) from Sus scrofa (Pig).